Here is a 168-residue protein sequence, read N- to C-terminus: tRNA-splicing endonuclease (168 aa).

Catalysis depends on residues tyrosine 107, histidine 114, and lysine 145.

The protein belongs to the tRNA-intron endonuclease family. Archaeal short subfamily. In terms of assembly, homotetramer; although the tetramer contains four active sites, only two participate in the cleavage. Therefore, it should be considered as a dimer of dimers.

It carries out the reaction pretRNA = a 3'-half-tRNA molecule with a 5'-OH end + a 5'-half-tRNA molecule with a 2',3'-cyclic phosphate end + an intron with a 2',3'-cyclic phosphate and a 5'-hydroxyl terminus.. Its function is as follows. Endonuclease that removes tRNA introns. Cleaves pre-tRNA at the 5'- and 3'-splice sites to release the intron. The products are an intron and two tRNA half-molecules bearing 2',3' cyclic phosphate and 5'-OH termini. Recognizes a pseudosymmetric substrate in which 2 bulged loops of 3 bases are separated by a stem of 4 bp. In Thermococcus gammatolerans (strain DSM 15229 / JCM 11827 / EJ3), this protein is tRNA-splicing endonuclease.